The following is a 370-amino-acid chain: uncharacterized protein (370 aa).

The protein belongs to the metallo-dependent hydrolases superfamily.

This is an uncharacterized protein from Mycobacterium bovis (strain ATCC BAA-935 / AF2122/97).